The sequence spans 73 residues: Conotoxin Lt9a (73 aa).

The first 23 residues, Met1–Val23, serve as a signal peptide directing secretion. The propeptide occupies Gln24 to Ser40. Cystine bridges form between Cys48–Cys62, Cys53–Cys64, and Cys59–Cys69.

This sequence belongs to the conotoxin P superfamily. As to expression, expressed by the venom duct.

It is found in the secreted. Functionally, probable neurotoxin that inhibits ion channels. This chain is Conotoxin Lt9a, found in Conus litteratus (Lettered cone).